The following is a 433-amino-acid chain: Serine--tRNA ligase (433 aa).

Threonine 235 to glutamate 237 serves as a coordination point for L-serine. Arginine 266–glutamate 268 contributes to the ATP binding site. Glutamate 289 provides a ligand contact to L-serine. Position 353–356 (glutamate 353–serine 356) interacts with ATP. Serine 388 contributes to the L-serine binding site.

The protein belongs to the class-II aminoacyl-tRNA synthetase family. Type-1 seryl-tRNA synthetase subfamily. Homodimer. The tRNA molecule binds across the dimer.

Its subcellular location is the cytoplasm. The enzyme catalyses tRNA(Ser) + L-serine + ATP = L-seryl-tRNA(Ser) + AMP + diphosphate + H(+). It carries out the reaction tRNA(Sec) + L-serine + ATP = L-seryl-tRNA(Sec) + AMP + diphosphate + H(+). The protein operates within aminoacyl-tRNA biosynthesis; selenocysteinyl-tRNA(Sec) biosynthesis; L-seryl-tRNA(Sec) from L-serine and tRNA(Sec): step 1/1. Functionally, catalyzes the attachment of serine to tRNA(Ser). Is also able to aminoacylate tRNA(Sec) with serine, to form the misacylated tRNA L-seryl-tRNA(Sec), which will be further converted into selenocysteinyl-tRNA(Sec). This Burkholderia orbicola (strain MC0-3) protein is Serine--tRNA ligase.